The chain runs to 504 residues: MEEFQGYLELEKSRQRDFLYPLIFREYIYAFSHDHFLNGSILLENSGYDKKSSLLMVKHLITRMYHQNHFFFFTNYYNKNPFWGYNNNLYSQMLSEGFAVIVEIPLSLRLVSSLEEEEIAKSYNLRSSHSIFPFLEDKFPHLNYVSDVLIPYPLHLEILVQILRSWVKDASSFHLLRFFFHEYCNLNSLSTSKKLISFFSKRNRRLVLLLYNSYVCEYESIFLFLRNQSSHIRLTSYKGLFERIYFYGKIEHLVKVFANYFSAILRVFKDPLIHYVRYQAKSILVSKDTPLLINKWKYYLVNLWQCHFYVWSQPERIYINQLSKRSLDFLGYISSVRLNPSVVWTQMLENSFLIDNATQKLDTLVPIITLLASLAKAKFCNVLGHPISKPTWIDSSDFDIIDRFLRISRNLSHYYRGSSKKKNLYRIQYILRLSCVKTLARKHKSTVRALFKRLNSELLEEFFTEQEQVLSLIFPRTSFTLRRVYRGKIWYLDIICMNDLANHE.

Belongs to the intron maturase 2 family. MatK subfamily.

Its subcellular location is the plastid. It is found in the chloroplast. Usually encoded in the trnK tRNA gene intron. Probably assists in splicing its own and other chloroplast group II introns. The polypeptide is Maturase K (Cucumis sativus (Cucumber)).